The following is a 452-amino-acid chain: Tubulin beta-2 chain (452 aa).

GTP contacts are provided by Q11, E72, S141, G145, T146, G147, N207, and N229. E72 lines the Mg(2+) pocket. A disordered region spans residues 414–452; the sequence is AESNMNDPVAEYQQYQDATADDEEEYDDEAADDHHQYES. The span at 432–444 shows a compositional bias: acidic residues; sequence TADDEEEYDDEAA.

The protein belongs to the tubulin family. As to quaternary structure, dimer of alpha and beta chains. A typical microtubule is a hollow water-filled tube with an outer diameter of 25 nm and an inner diameter of 15 nM. Alpha-beta heterodimers associate head-to-tail to form protofilaments running lengthwise along the microtubule wall with the beta-tubulin subunit facing the microtubule plus end conferring a structural polarity. Microtubules usually have 13 protofilaments but different protofilament numbers can be found in some organisms and specialized cells. Requires Mg(2+) as cofactor.

The protein resides in the cytoplasm. Its subcellular location is the cytoskeleton. Its function is as follows. Tubulin is the major constituent of microtubules, a cylinder consisting of laterally associated linear protofilaments composed of alpha- and beta-tubulin heterodimers. Microtubules grow by the addition of GTP-tubulin dimers to the microtubule end, where a stabilizing cap forms. Below the cap, tubulin dimers are in GDP-bound state, owing to GTPase activity of alpha-tubulin. In Solanum tuberosum (Potato), this protein is Tubulin beta-2 chain (TUBB2).